Consider the following 360-residue polypeptide: Cell division protein DivIB (360 aa).

The disordered stretch occupies residues 1–54; sequence MTEKDSNVEESVLEVEQASQVELDSEQISPAEKESVLAEEKEFSTDVDIPEMTA. Topologically, residues 1 to 139 are cytoplasmic; that stretch reads MTEKDSNVEE…VDIPSKVVWK (139 aa). The span at 17-28 shows a compositional bias: polar residues; it reads QASQVELDSEQI. Basic and acidic residues predominate over residues 31–44; that stretch reads AEKESVLAEEKEFS. Residues 140-160 form a helical membrane-spanning segment; that stretch reads AIPVLVTSLLLAALALYFISP. Topologically, residues 161 to 360 are extracellular; it reads TSKKKQIEVV…MEVGIYRYAS (200 aa). The 72-residue stretch at 162-233 folds into the POTRA domain; that stretch reads SKKKQIEVVG…ATFTIHIKEY (72 aa).

This sequence belongs to the FtsQ/DivIB family. DivIB subfamily.

It localises to the cell membrane. Functionally, cell division protein that may be involved in stabilizing or promoting the assembly of the division complex. The chain is Cell division protein DivIB from Streptococcus suis (strain GZ1).